The following is a 177-amino-acid chain: Thymidine kinase (177 aa).

11 to 18 (GPMFSGKS) contacts ATP. Glu-83 (proton acceptor) is an active-site residue. Phe-113 lines the substrate pocket. 2 residues coordinate Zn(2+): Cys-138 and Cys-141. 157-161 (IEIIG) provides a ligand contact to substrate. Zn(2+) contacts are provided by Cys-170 and Cys-173.

Belongs to the thymidine kinase family. In terms of assembly, homotetramer. Two molecules of substrate bind to each enzyme tetramer.

The enzyme catalyses thymidine + ATP = dTMP + ADP + H(+). In terms of biological role, phosphorylates thymidine and thymidine analogs, such as azidothymidine (AZT). Part of the salvage pathway for pyrimidine deoxyribonucleotide synthesis. This Procyon lotor (Raccoon) protein is Thymidine kinase (OPG101).